The sequence spans 248 residues: Pathogenesis-related thaumatin-like protein 3.4 (248 aa).

A signal peptide spans 1–25 (MARAILWVLLTVMAVSLLLHAGVEG). 8 disulfide bridges follow: Cys-34–Cys-227, Cys-75–Cys-85, Cys-90–Cys-96, Cys-141–Cys-216, Cys-146–Cys-199, Cys-154–Cys-164, Cys-168–Cys-177, and Cys-178–Cys-186. The N-linked (GlcNAc...) asparagine glycan is linked to Asn-235.

It belongs to the thaumatin family. Mainly expressed in male and female strobili, and, at lower levels, in roots of seedlings and saplings.

In terms of biological role, may be involved in disease resistance. This chain is Pathogenesis-related thaumatin-like protein 3.4, found in Cryptomeria japonica (Japanese cedar).